The primary structure comprises 550 residues: Hydroxylamine reductase (550 aa).

Residues Cys-3, Cys-6, Cys-18, and Cys-25 each coordinate [2Fe-2S] cluster. 8 residues coordinate hybrid [4Fe-2O-2S] cluster: His-249, Glu-273, Cys-317, Cys-405, Cys-433, Cys-458, Glu-492, and Lys-494. At Cys-405 the chain carries Cysteine persulfide.

Belongs to the HCP family. It depends on [2Fe-2S] cluster as a cofactor. The cofactor is hybrid [4Fe-2O-2S] cluster.

It localises to the cytoplasm. The enzyme catalyses A + NH4(+) + H2O = hydroxylamine + AH2 + H(+). In terms of biological role, catalyzes the reduction of hydroxylamine to form NH(3) and H(2)O. The chain is Hydroxylamine reductase from Escherichia coli O17:K52:H18 (strain UMN026 / ExPEC).